The chain runs to 432 residues: Probable rhamnogalacturonase E (432 aa).

Residues 1–21 (MQSKTFSVLSSCLLLIATVQG) form the signal peptide. A disulfide bridge connects residues Cys-42 and Cys-68. N-linked (GlcNAc...) asparagine glycans are attached at residues Asn-53, Asn-91, and Asn-106. The active-site Proton donor is the Asp-221. An intrachain disulfide couples Cys-223 to Cys-240. Residues Asn-241 and Asn-256 are each glycosylated (N-linked (GlcNAc...) asparagine). His-296 is an active-site residue. Cystine bridges form between Cys-329/Cys-335 and Cys-357/Cys-366.

This sequence belongs to the glycosyl hydrolase 28 family.

The protein localises to the secreted. Functionally, pectinolytic enzymes consist of four classes of enzymes: pectine lyase, polygalacturonase, pectin methylesterase and rhamnogalacturonase. Hydrolyzes alpha-D-galacturonopyranosyl-(1,2)-alpha-L-rhamnopyranosyl linkages in the backbone of the hairy regions of pectins. The polypeptide is Probable rhamnogalacturonase E (rhgE) (Aspergillus oryzae (strain ATCC 42149 / RIB 40) (Yellow koji mold)).